A 132-amino-acid polypeptide reads, in one-letter code: Large ribosomal subunit protein uL24 (132 aa).

Belongs to the universal ribosomal protein uL24 family. Part of the 50S ribosomal subunit.

One of two assembly initiator proteins, it binds directly to the 5'-end of the 23S rRNA, where it nucleates assembly of the 50S subunit. In terms of biological role, one of the proteins that surrounds the polypeptide exit tunnel on the outside of the subunit. The polypeptide is Large ribosomal subunit protein uL24 (Synechococcus sp. (strain JA-2-3B'a(2-13)) (Cyanobacteria bacterium Yellowstone B-Prime)).